The following is a 471-amino-acid chain: Retinoic acid receptor RXR-beta-A (471 aa).

Residues 1-34 (MGDSRDSRSPDSSSVSSPPSGQRSPPLAPSAAAM) are disordered. Residues 1–102 (MGDSRDSRSP…HAVSSSDDVK (102 aa)) are modulating. Positions 10-25 (PDSSSVSSPPSGQRSP) are enriched in low complexity. Positions 122–197 (KRLCAICGDR…MGMKREVVQD (76 aa)) form a DNA-binding region, nuclear receptor. NR C4-type zinc fingers lie at residues 125–145 (CAIC…CEGC) and 161–185 (CRDN…YQKC). A compositionally biased stretch (basic and acidic residues) spans 196 to 216 (QDERQRSVQEERQRNKERDGE). The interval 196–226 (QDERQRSVQEERQRNKERDGEVESSSAANEE) is disordered. Positions 198–221 (ERQRSVQEERQRNKERDGEVESSS) are hinge. An NR LBD domain is found at 224–467 (NEEMPVEKIL…TFLMEMLEAP (244 aa)).

This sequence belongs to the nuclear hormone receptor family. NR2 subfamily. In terms of assembly, homodimer. Heterodimer; with a rar molecule. Binds DNA preferentially as a rar/rxr heterodimer. Heterodimerizes with rarga. In terms of tissue distribution, shows uniform expression from the blastula to mid-gastrula stages. At 12 hours post-fertilization (hpf), expressed ubiquitously but more weakly. At 24 hpf, restricted to the ventral diencephalon, pharangeal endoderm and trunk and tail mesoderm; mesoderm expression is in medial cells of each somite along the dorsoventral axis, forming stripes. At 48 hpf, expressed in forebrain, eye, midbrain and anterior hindbrain.

Its subcellular location is the nucleus. Its function is as follows. Receptor for retinoic acid. Retinoic acid receptors bind as heterodimers to their target response elements in response to their ligands, all-trans or 9-cis retinoic acid, and regulate gene expression in various biological processes. The rar/rxr heterodimers bind to the retinoic acid response elements (RARE) composed of tandem 5'-AGGTCA-3' sites known as DR1-DR5. The high affinity ligand for rxrs is 9-cis retinoic acid. The protein is Retinoic acid receptor RXR-beta-A (rxrba) of Danio rerio (Zebrafish).